Reading from the N-terminus, the 211-residue chain is 2,3-bisphosphoglycerate-dependent phosphoglycerate mutase (211 aa).

Residues 9–16, 22–23, R61, 88–91, K99, 115–116, and 159–160 each bind substrate; these read RHGQSDWN, TG, ERDY, RR, and GN. H10 functions as the Tele-phosphohistidine intermediate in the catalytic mechanism. The Proton donor/acceptor role is filled by E88.

This sequence belongs to the phosphoglycerate mutase family. BPG-dependent PGAM subfamily. In terms of assembly, homodimer.

It catalyses the reaction (2R)-2-phosphoglycerate = (2R)-3-phosphoglycerate. The protein operates within carbohydrate degradation; glycolysis; pyruvate from D-glyceraldehyde 3-phosphate: step 3/5. In terms of biological role, catalyzes the interconversion of 2-phosphoglycerate and 3-phosphoglycerate. This chain is 2,3-bisphosphoglycerate-dependent phosphoglycerate mutase, found in Rhizobium johnstonii (strain DSM 114642 / LMG 32736 / 3841) (Rhizobium leguminosarum bv. viciae).